The sequence spans 311 residues: Urease accessory protein UreD (311 aa).

Belongs to the UreD family. In terms of assembly, ureD, UreF and UreG form a complex that acts as a GTP-hydrolysis-dependent molecular chaperone, activating the urease apoprotein by helping to assemble the nickel containing metallocenter of UreC. The UreE protein probably delivers the nickel.

It is found in the cytoplasm. Its function is as follows. Required for maturation of urease via the functional incorporation of the urease nickel metallocenter. The protein is Urease accessory protein UreD of Synechococcus sp. (strain CC9902).